A 298-amino-acid polypeptide reads, in one-letter code: Small ribosomal subunit protein uS3 (298 aa).

A KH type-2 domain is found at 38-106 (IRRRLSRGME…QVQLNILEVK (69 aa)). The segment at 212–298 (KQKQQESEVR…EPRADEKTEG (87 aa)) is disordered. The segment covering 214 to 237 (KQQESEVRPPRGERGERGGRPERG) has biased composition (basic and acidic residues). A compositionally biased stretch (polar residues) spans 265 to 278 (GSAQSPEQAQTSGD).

Belongs to the universal ribosomal protein uS3 family. Part of the 30S ribosomal subunit. Forms a tight complex with proteins S10 and S14.

Its function is as follows. Binds the lower part of the 30S subunit head. Binds mRNA in the 70S ribosome, positioning it for translation. This Saccharopolyspora erythraea (strain ATCC 11635 / DSM 40517 / JCM 4748 / NBRC 13426 / NCIMB 8594 / NRRL 2338) protein is Small ribosomal subunit protein uS3.